Here is a 279-residue protein sequence, read N- to C-terminus: Protein gustavus (279 aa).

The region spanning 36 to 233 (PARIDILLDM…ITMRYIGGLD (198 aa)) is the B30.2/SPRY domain. The SOCS box domain maps to 234 to 279 (PEPLPLMDLCRRTIRQKIGRTNLEEHIQQLQLPLSMKTYLLYKNRR). The segment at 236 to 279 (PLPLMDLCRRTIRQKIGRTNLEEHIQQLQLPLSMKTYLLYKNRR) is involved in binding to the Elongin BC complex.

Belongs to the SPSB family. Interacts (via B30.2/SPRY domain) with vas; this interaction may be necessary for the transport of vas to the posterior pole of the oocyte. Interacts with Cul-5. May associate with the Elongin BC complex composed of Elongin-B and Elongin-C. Expressed in ovaries, primarily in nurse cells and oocytes (at protein level).

Its subcellular location is the cytoplasm. The protein localises to the nucleus. Functionally, involved in the localization of vas to the posterior pole of the oocyte. Required maternally in the germ line for efficient primordial germ cell formation. This Drosophila melanogaster (Fruit fly) protein is Protein gustavus (gus).